We begin with the raw amino-acid sequence, 91 residues long: Small ribosomal subunit protein bS16 (91 aa).

This sequence belongs to the bacterial ribosomal protein bS16 family.

This Lacticaseibacillus casei (strain BL23) (Lactobacillus casei) protein is Small ribosomal subunit protein bS16.